Here is a 423-residue protein sequence, read N- to C-terminus: UDP-N-acetylglucosamine 1-carboxyvinyltransferase 2 (423 aa).

A phosphoenolpyruvate-binding site is contributed by 23–24; it reads KN. R96 provides a ligand contact to UDP-N-acetyl-alpha-D-glucosamine. The active-site Proton donor is C120. A 2-(S-cysteinyl)pyruvic acid O-phosphothioketal modification is found at C120. Residues 125–129, D309, and V331 each bind UDP-N-acetyl-alpha-D-glucosamine; that span reads RPIDL.

This sequence belongs to the EPSP synthase family. MurA subfamily.

The protein localises to the cytoplasm. The catalysed reaction is phosphoenolpyruvate + UDP-N-acetyl-alpha-D-glucosamine = UDP-N-acetyl-3-O-(1-carboxyvinyl)-alpha-D-glucosamine + phosphate. It functions in the pathway cell wall biogenesis; peptidoglycan biosynthesis. Cell wall formation. Adds enolpyruvyl to UDP-N-acetylglucosamine. The polypeptide is UDP-N-acetylglucosamine 1-carboxyvinyltransferase 2 (Streptococcus agalactiae serotype Ia (strain ATCC 27591 / A909 / CDC SS700)).